The chain runs to 278 residues: NADPH-dependent 7-cyano-7-deazaguanine reductase (278 aa).

A substrate-binding site is contributed by 87-89; it reads IES. 89–90 serves as a coordination point for NADPH; the sequence is SK. The active-site Thioimide intermediate is the cysteine 185. Aspartate 192 (proton donor) is an active-site residue. 224-225 serves as a coordination point for substrate; the sequence is HE. 253 to 254 is a binding site for NADPH; the sequence is RG. The interval 255-278 is disordered; the sequence is GLDINPYRSTNPTFSVQNHRSFRQ. The span at 261 to 278 shows a compositional bias: polar residues; the sequence is YRSTNPTFSVQNHRSFRQ.

This sequence belongs to the GTP cyclohydrolase I family. QueF type 2 subfamily. In terms of assembly, homodimer.

It localises to the cytoplasm. It carries out the reaction 7-aminomethyl-7-carbaguanine + 2 NADP(+) = 7-cyano-7-deazaguanine + 2 NADPH + 3 H(+). Its pathway is tRNA modification; tRNA-queuosine biosynthesis. In terms of biological role, catalyzes the NADPH-dependent reduction of 7-cyano-7-deazaguanine (preQ0) to 7-aminomethyl-7-deazaguanine (preQ1). The protein is NADPH-dependent 7-cyano-7-deazaguanine reductase of Coxiella burnetii (strain CbuG_Q212) (Coxiella burnetii (strain Q212)).